A 218-amino-acid chain; its full sequence is Probable 2-aminoethanethiol dioxygenase (218 aa).

Requires Fe cation as cofactor.

The catalysed reaction is cysteamine + O2 = hypotaurine + H(+). The sequence is that of Probable 2-aminoethanethiol dioxygenase (ado-1) from Dictyostelium discoideum (Social amoeba).